The sequence spans 208 residues: Small ribosomal subunit protein uS9c (208 aa).

The N-terminal 52 residues, 1–52 (MASITNLASSLSSLSFSSQVSQRPNTISFPRANSVFALPAKSARRASLSITA), are a transit peptide targeting the chloroplast.

It belongs to the universal ribosomal protein uS9 family.

It is found in the plastid. Its subcellular location is the chloroplast. Functionally, binds directly to 16S ribosomal RNA. In Arabidopsis thaliana (Mouse-ear cress), this protein is Small ribosomal subunit protein uS9c (RPS9).